The primary structure comprises 713 residues: Phosphoribosylformylglycinamidine synthase subunit PurL (713 aa).

His-34 is an active-site residue. Residues Tyr-37 and Arg-73 each contribute to the ATP site. Residue Glu-75 participates in Mg(2+) binding. Substrate-binding positions include Ser-76–His-79 and Arg-98. Catalysis depends on His-77, which acts as the Proton acceptor. Asp-99 is a Mg(2+) binding site. Gln-221 is a binding site for substrate. Asp-249 lines the Mg(2+) pocket. Glu-292–Gln-294 is a substrate binding site. The ATP site is built by Asp-474 and Gly-511. Ser-514 lines the substrate pocket.

Belongs to the FGAMS family. In terms of assembly, monomer. Part of the FGAM synthase complex composed of 1 PurL, 1 PurQ and 2 PurS subunits.

It localises to the cytoplasm. The catalysed reaction is N(2)-formyl-N(1)-(5-phospho-beta-D-ribosyl)glycinamide + L-glutamine + ATP + H2O = 2-formamido-N(1)-(5-O-phospho-beta-D-ribosyl)acetamidine + L-glutamate + ADP + phosphate + H(+). It functions in the pathway purine metabolism; IMP biosynthesis via de novo pathway; 5-amino-1-(5-phospho-D-ribosyl)imidazole from N(2)-formyl-N(1)-(5-phospho-D-ribosyl)glycinamide: step 1/2. Part of the phosphoribosylformylglycinamidine synthase complex involved in the purines biosynthetic pathway. Catalyzes the ATP-dependent conversion of formylglycinamide ribonucleotide (FGAR) and glutamine to yield formylglycinamidine ribonucleotide (FGAM) and glutamate. The FGAM synthase complex is composed of three subunits. PurQ produces an ammonia molecule by converting glutamine to glutamate. PurL transfers the ammonia molecule to FGAR to form FGAM in an ATP-dependent manner. PurS interacts with PurQ and PurL and is thought to assist in the transfer of the ammonia molecule from PurQ to PurL. This chain is Phosphoribosylformylglycinamidine synthase subunit PurL, found in Ignicoccus hospitalis (strain KIN4/I / DSM 18386 / JCM 14125).